The sequence spans 629 residues: RNA polymerase sigma factor RpoD (629 aa).

Positions His183–Ile228 are disordered. Acidic residues predominate over residues Asp187–Ile228. A sigma-70 factor domain-2 region spans residues Met395–Thr465. The short motif at Asp419–Gln422 is the Interaction with polymerase core subunit RpoC element. Residues Glu474–Ser550 form a sigma-70 factor domain-3 region. The tract at residues Val563–His616 is sigma-70 factor domain-4. A DNA-binding region (H-T-H motif) is located at residues Leu589 to Ala608.

Belongs to the sigma-70 factor family. RpoD/SigA subfamily. In terms of assembly, interacts transiently with the RNA polymerase catalytic core.

It is found in the cytoplasm. Functionally, sigma factors are initiation factors that promote the attachment of RNA polymerase to specific initiation sites and are then released. This sigma factor is the primary sigma factor during exponential growth. The chain is RNA polymerase sigma factor RpoD from Haemophilus influenzae (strain ATCC 51907 / DSM 11121 / KW20 / Rd).